A 275-amino-acid chain; its full sequence is Methylthioribulose-1-phosphate dehydratase (275 aa).

Cys125 is a substrate binding site. 2 residues coordinate Zn(2+): His143 and His145. Glu168 (proton donor/acceptor) is an active-site residue. His233 serves as a coordination point for Zn(2+).

The protein belongs to the aldolase class II family. MtnB subfamily. It depends on Zn(2+) as a cofactor.

It is found in the cytoplasm. It carries out the reaction 5-(methylsulfanyl)-D-ribulose 1-phosphate = 5-methylsulfanyl-2,3-dioxopentyl phosphate + H2O. The protein operates within amino-acid biosynthesis; L-methionine biosynthesis via salvage pathway; L-methionine from S-methyl-5-thio-alpha-D-ribose 1-phosphate: step 2/6. In terms of biological role, catalyzes the dehydration of methylthioribulose-1-phosphate (MTRu-1-P) into 2,3-diketo-5-methylthiopentyl-1-phosphate (DK-MTP-1-P). This is Methylthioribulose-1-phosphate dehydratase from Lodderomyces elongisporus (strain ATCC 11503 / CBS 2605 / JCM 1781 / NBRC 1676 / NRRL YB-4239) (Yeast).